We begin with the raw amino-acid sequence, 763 residues long: MKRDFDEISEEEWSQHSFNASRVLKRPRTPKKTRAATNPTPSIESFAFRRPSTAMTIESNSSDGDCVEIEDLGDSDSDVKIVNGEDLLLEDEEEVEETKVVMRAARVGRRFVIEDEEASDDDDDEAESSASEDEFGGGGGGSGGRRGEDEDVVGKALQKCAKISADLRKELYGTSSGVTDRYSEVETSTVRIVTQNDIDDACKAEDSDFQPILKPYQLVGVNFLLLLYKKGIEGAILADEMGLGKTIQAITYLTLLSRLNNDPGPHLVVCPASVLENWERELRKWCPSFTVLQYHGAARAAYSRELNSLSKAGKPPPFNVLLVCYSLFERHSEQQKDDRKVLKRWRWSCVLMDEAHALKDKNSYRWKNLMSVARNANQRLMLTGTPLQNDLHELWSLLEFMLPDIFTTENVDLKKLLNAEDTELITRMKSILGPFILRRLKSDVMQQLVPKIQRVEYVLMERKQEDAYKEAIEEYRAASQARLVKLSSKSLNSLAKALPKRQISNYFTQFRKIANHPLLIRRIYSDEDVIRIARKLHPIGAFGFECSLDRVIEEVKGFNDFRIHQLLFQYGVNDTKGTLSDKHVMLSAKCRTLAELLPSMKKSGHRVLIFSQWTSMLDILEWTLDVIGVTYRRLDGSTQVTDRQTIVDTFNNDKSIFACLLSTRAGGQGLNLTGADTVIIHDMDFNPQIDRQAEDRCHRIGQTKPVTIFRLVTKSTVDENIYEIAKRKLVLDAAVLESGVHVDDNGDTPEKTMGEILASLLMG.

Disordered stretches follow at residues methionine 1–isoleucine 43 and glutamate 114–aspartate 149. Residues valine 23–arginine 34 show a composition bias toward basic residues. Acidic residues predominate over residues glutamate 114–phenylalanine 135. Residues leucine 226–aspartate 404 form the Helicase ATP-binding domain. Aspartate 239–threonine 246 lines the ATP pocket. Residues aspartate 353–histidine 356 carry the DEAH box motif. The stretch at arginine 462 to arginine 482 forms a coiled coil. Positions isoleucine 520 to glutamate 527 match the Nuclear localization signal motif. The 151-residue stretch at threonine 592–valine 742 folds into the Helicase C-terminal domain.

Belongs to the SNF2/RAD54 helicase family. In terms of assembly, interacts with SUVR2 and itself.

It is found in the nucleus. In terms of biological role, DNA helicase that possesses intrinsic ATP-dependent nucleosome-remodeling activity and is both required for DNA repair and heterochromatin organization. Promotes DNA end resection of double-strand breaks (DSBs) following DNA damage: probably acts by weakening histone DNA interactions in nucleosomes flanking DSBs. Probable chromatin remodeling factor. Probable helicase-like transcription factor involved in transcriptional gene silencing. Associates with SUVR2 and contributes to transcriptional gene silencing at RNA-directed DNA methylation (RdDM) target loci but also at RdDM-independent target loci. May be involved in nucleosome positioning to form ordered nucleosome arrays on chromatin. The chain is Protein CHROMATIN REMODELING 19 from Arabidopsis thaliana (Mouse-ear cress).